The chain runs to 555 residues: Splicing factor U2af large subunit A (555 aa).

A disordered region spans residues Met1 to Thr165. Composition is skewed to basic and acidic residues over residues Ile23–Arg81 and Arg90–Asp127. Residues Ser143–Arg155 show a composition bias toward basic residues. RRM domains lie at Arg221–Asp304, Asp341–Gln419, and Glu460–Asn546.

The protein belongs to the splicing factor SR family. As to expression, expressed in stems, leaves and apical buds.

Its subcellular location is the nucleus. Functionally, necessary for the splicing of pre-mRNA. Binds to the U -enriched regions of plant introns. This chain is Splicing factor U2af large subunit A (U2AF65A), found in Nicotiana plumbaginifolia (Leadwort-leaved tobacco).